The following is a 93-amino-acid chain: RNA-binding protein Hfq (93 aa).

Positions 9–68 constitute a Sm domain; sequence DPYLNALRRERIPVSIYLVNGIKLQGQIESFDQFVILLKNTVSQMVYKHAISTVVPARAI. A compositionally biased stretch (low complexity) spans 70–81; it reads HNNNSNHAHQAA. The segment at 70 to 93 is disordered; sequence HNNNSNHAHQAAPVQSAEVVEKVE.

Belongs to the Hfq family. Homohexamer.

Its function is as follows. RNA chaperone that binds small regulatory RNA (sRNAs) and mRNAs to facilitate mRNA translational regulation in response to envelope stress, environmental stress and changes in metabolite concentrations. Also binds with high specificity to tRNAs. This chain is RNA-binding protein Hfq, found in Glaesserella parasuis serovar 5 (strain SH0165) (Haemophilus parasuis).